Consider the following 459-residue polypeptide: Hemopexin (459 aa).

Residues 1–23 (MARALRVPVALWLLGLCWSLAKA) form the signal peptide. Cystine bridges form between cysteine 52-cysteine 232, cysteine 150-cysteine 155, and cysteine 189-cysteine 201. Hemopexin repeat units lie at residues 55-95 (GWGF…WKDA), 96-140 (PSPV…FPGI), 141-185 (PFPL…SWPA), and 186-232 (VGNC…FMSC). Residue histidine 81 participates in heme binding. Histidine 151 serves as a coordination point for heme. N-linked (GlcNAc...) asparagine glycosylation occurs at asparagine 188. The N-linked (GlcNAc...) asparagine glycan is linked to asparagine 218. Histidine 237 is a heme binding site. Asparagine 241 carries N-linked (GlcNAc...) asparagine glycosylation. Intrachain disulfides connect cysteine 250/cysteine 453, cysteine 359/cysteine 401, and cysteine 411/cysteine 428. Hemopexin repeat units lie at residues 252–297 (PHLV…WPQG), 298–345 (PSTV…FGSP), 350–389 (LHSVDAAFTCPGSSQLYIMAGQKLWRLDLNLGAQATWTEL), and 393–444 (HTKV…LPQA). Residue histidine 286 participates in heme binding.

This sequence belongs to the hemopexin family.

The protein localises to the secreted. Functionally, binds heme and transports it to the liver for breakdown and iron recovery, after which the free hemopexin returns to the circulation. The polypeptide is Hemopexin (HPX) (Bos taurus (Bovine)).